The primary structure comprises 462 residues: Elongation factor 1-alpha 1 (462 aa).

A N,N,N-trimethylglycine modification is found at G2. A tr-type G domain is found at 5 to 242 (KTHINIVVIG…DCILPPTRPT (238 aa)). The interval 14-21 (GHVDSGKS) is G1. Residue 14 to 21 (GHVDSGKS) coordinates GTP. K36 carries the N6,N6,N6-trimethyllysine; alternate modification. Residue K36 is modified to N6,N6-dimethyllysine; alternate. K36 bears the N6-methyllysine; alternate mark. Position 55 is an N6,N6-dimethyllysine (K55). Residues 70–74 (GITID) form a G2 region. The residue at position 79 (K79) is an N6,N6,N6-trimethyllysine; by EEF1AKMT1. The G3 stretch occupies residues 91-94 (DAPG). 153–156 (NKMD) contacts GTP. The segment at 153-156 (NKMD) is G4. K165 bears the N6,N6,N6-trimethyllysine; alternate; by EEF1AKMT3 mark. K165 bears the N6,N6-dimethyllysine; alternate; by EEF1AKMT3 mark. K165 is subject to N6-acetyllysine; alternate. Residue K165 is modified to N6-methyllysine; alternate; by EEF1AKMT3. K172 is subject to N6-acetyllysine. 194 to 196 (SGW) serves as a coordination point for GTP. The G5 stretch occupies residues 194 to 196 (SGW). K273 is modified (N6-acetyllysine). The residue at position 300 (S300) is a Phosphoserine; by TGFBR1. Residue E301 is modified to 5-glutamyl glycerylphosphorylethanolamine. Position 318 is an N6,N6,N6-trimethyllysine; by EEF1AKMT2 (K318). E374 is subject to 5-glutamyl glycerylphosphorylethanolamine. K385 participates in a covalent cross-link: Glycyl lysine isopeptide (Lys-Gly) (interchain with G-Cter in ubiquitin). At K392 the chain carries N6-acetyllysine; alternate. K392 carries the post-translational modification N6-succinyllysine; alternate. T432 is modified (phosphothreonine; by PASK). Position 439 is an N6-acetyllysine (K439).

This sequence belongs to the TRAFAC class translation factor GTPase superfamily. Classic translation factor GTPase family. EF-Tu/EF-1A subfamily. In terms of assembly, found in a nuclear export complex with XPO5, EEF1A1, Ran and aminoacylated tRNA. Interacts with PARP1 and TXK. Interacts with KARS1. May interact with ERGIC2. Interacts with IFIT1 (via TPR repeats 4-7). Interacts with DLC1, facilitating distribution to the membrane periphery and ruffles upon growth factor stimulation. Interacts with ZPR1; the interaction occurs in a epidermal growth factor (EGF)-dependent manner. Interacts with PPP1R16B. Interacts with SPHK1 and SPHK2; both interactions increase SPHK1 and SPHK2 kinase activity. Interacts with guanyl-nucleotide exchange factor EEF1B2. Interacts (via middle-region) with HTATIP2 (via N-terminus); the interaction is direct and competes with EEF1A1 binding to guanyl-nucleotide exchange factor EEF1B2, thereby inhibiting GDP for GTP exchange and reactivation of EEF1A1. Interacts with tRNA. In terms of processing, ISGylated. Post-translationally, phosphorylated by TXK. Phosphorylation by PASK increases translation efficiency. Phosphorylated by ROCK2. Phosphorylation by TGFBR1 inhibits translation elongation. Trimethylated at Lys-79 by EEF1AKMT1. Methylated at Lys-165 by EEF1AKMT3, methylation by EEF1AKMT3 is dynamic as well as inducible by stress conditions, such as ER-stress, and plays a regulatory role on mRNA translation. Trimethylated at Lys-318 by EEF1AKMT2. Mono-, di-, and trimethylated at Lys-36 by EEF1AKMT4; trimethylated form is predominant. Methylation by EEF1AKMT4 contributes to the fine-tuning of translation rates for a subset of tRNAs. Trimethylated at Gly-2 by METTL13. Mono- and dimethylated at Lys-55 by METTL13; dimethylated form is predominant. In terms of processing, ubiquitinated at Lys-385 by RNF14 in response to ribosome collisions (ribosome stalling), leading to its degradation by the proteasome and rescue of stalled ribosomes.

It is found in the cytoplasm. The protein resides in the nucleus. Its subcellular location is the nucleolus. It localises to the cell membrane. It carries out the reaction GTP + H2O = GDP + phosphate + H(+). Its function is as follows. Translation elongation factor that catalyzes the GTP-dependent binding of aminoacyl-tRNA (aa-tRNA) to the A-site of ribosomes during the elongation phase of protein synthesis. Base pairing between the mRNA codon and the aa-tRNA anticodon promotes GTP hydrolysis, releasing the aa-tRNA from EEF1A1 and allowing its accommodation into the ribosome. The growing protein chain is subsequently transferred from the P-site peptidyl tRNA to the A-site aa-tRNA, extending it by one amino acid through ribosome-catalyzed peptide bond formation. Also plays a role in the positive regulation of IFNG transcription in T-helper 1 cells as part of an IFNG promoter-binding complex with TXK and PARP1. Also plays a role in cytoskeleton organization by promoting actin bundling. This Equus caballus (Horse) protein is Elongation factor 1-alpha 1 (EEF1A1).